The sequence spans 154 residues: Transcriptional repressor NrdR (154 aa).

A zinc finger spans residues 3–34; it reads CPTCKYNGTRVVDSRPADDGNSIRRRRECEKC. The region spanning 49–139 is the ATP-cone domain; it reads LIVVKKDGAR…VYRQFKDISV (91 aa).

This sequence belongs to the NrdR family. It depends on Zn(2+) as a cofactor.

Functionally, negatively regulates transcription of bacterial ribonucleotide reductase nrd genes and operons by binding to NrdR-boxes. This chain is Transcriptional repressor NrdR, found in Listeria welshimeri serovar 6b (strain ATCC 35897 / DSM 20650 / CCUG 15529 / CIP 8149 / NCTC 11857 / SLCC 5334 / V8).